The primary structure comprises 338 residues: Fructose-1,6-bisphosphatase class 1 1 (338 aa).

Mg(2+) contacts are provided by glutamate 94, aspartate 116, leucine 118, and aspartate 119. Substrate contacts are provided by residues 119–122 (DGSS), asparagine 210, and lysine 276. Glutamate 282 is a binding site for Mg(2+).

Belongs to the FBPase class 1 family. In terms of assembly, homotetramer. Requires Mg(2+) as cofactor.

The protein resides in the cytoplasm. It catalyses the reaction beta-D-fructose 1,6-bisphosphate + H2O = beta-D-fructose 6-phosphate + phosphate. Its pathway is carbohydrate biosynthesis; gluconeogenesis. The sequence is that of Fructose-1,6-bisphosphatase class 1 1 from Paraburkholderia xenovorans (strain LB400).